The sequence spans 169 residues: NADH dehydrogenase [ubiquinone] 1 alpha subcomplex assembly factor 2 (169 aa).

The interval 116-169 (TSEELLPPPVQTQIKGHASAPYFGKEEPSVAPSSTGKTFQPGSWMPRDGKSHNQ) is disordered. Ser-134 is subject to Phosphoserine. Positions 146–156 (APSSTGKTFQP) are enriched in polar residues.

Belongs to the complex I NDUFA12 subunit family. As to quaternary structure, interacts with ARMC9. In terms of tissue distribution, highly expressed in ESCC cells. Also expressed in heart, skeletal muscle, liver, and in fibroblasts.

The protein localises to the mitochondrion. Acts as a molecular chaperone for mitochondrial complex I assembly. Complex I functions in the transfer of electrons from NADH to the respiratory chain. The immediate electron acceptor for the enzyme is believed to be ubiquinone. Is involved in the initial steps of cilia formation, including removal of CP110 from the mother centrioles, docking of membrane vesicles to the mother centrioles, and establishment of the transition zone. The chain is NADH dehydrogenase [ubiquinone] 1 alpha subcomplex assembly factor 2 (NDUFAF2) from Homo sapiens (Human).